The primary structure comprises 275 residues: Large ribosomal subunit protein uL2 (275 aa).

Residues 223–275 (VAMNPVDHPHGGGEGRTGEGRVPVSPWGTPAKGYRTRNNKRTDNMIVRRRHSK) form a disordered region. The segment covering 229–241 (DHPHGGGEGRTGE) has biased composition (basic and acidic residues).

The protein belongs to the universal ribosomal protein uL2 family. In terms of assembly, part of the 50S ribosomal subunit. Forms a bridge to the 30S subunit in the 70S ribosome.

One of the primary rRNA binding proteins. Required for association of the 30S and 50S subunits to form the 70S ribosome, for tRNA binding and peptide bond formation. It has been suggested to have peptidyltransferase activity; this is somewhat controversial. Makes several contacts with the 16S rRNA in the 70S ribosome. This Laribacter hongkongensis (strain HLHK9) protein is Large ribosomal subunit protein uL2.